A 100-amino-acid polypeptide reads, in one-letter code: Small ribosomal subunit protein uS14c (100 aa).

Belongs to the universal ribosomal protein uS14 family. In terms of assembly, part of the 30S ribosomal subunit.

It localises to the plastid. The protein localises to the chloroplast. In terms of biological role, binds 16S rRNA, required for the assembly of 30S particles. This is Small ribosomal subunit protein uS14c from Capsella bursa-pastoris (Shepherd's purse).